A 609-amino-acid polypeptide reads, in one-letter code: UvrABC system protein C (609 aa).

Residues 16 to 94 (SSAGVYRMYD…IKQYMPKYNV (79 aa)) form the GIY-YIG domain. Residues 203 to 238 (QQVISALVDKMELAAERQAYEQAARFRDQIMALRKV) form the UVR domain.

It belongs to the UvrC family. Interacts with UvrB in an incision complex.

The protein localises to the cytoplasm. Its function is as follows. The UvrABC repair system catalyzes the recognition and processing of DNA lesions. UvrC both incises the 5' and 3' sides of the lesion. The N-terminal half is responsible for the 3' incision and the C-terminal half is responsible for the 5' incision. In Shewanella baltica (strain OS185), this protein is UvrABC system protein C.